Consider the following 120-residue polypeptide: Large ribosomal subunit protein bL17 (120 aa).

It belongs to the bacterial ribosomal protein bL17 family. Part of the 50S ribosomal subunit. Contacts protein L32.

This is Large ribosomal subunit protein bL17 from Mesomycoplasma hyopneumoniae (strain J / ATCC 25934 / NCTC 10110) (Mycoplasma hyopneumoniae).